The primary structure comprises 161 residues: Pro-corazonin (161 aa).

The signal sequence occupies residues 1 to 20; sequence MMRLLLLPLFLFTLSMACMG. Pyrrolidone carboxylic acid is present on Q21. N31 carries the asparagine amide modification. Residues 70-161 constitute a propeptide that is removed on maturation; sequence LERCLAQLQR…SGEPSVFGKH (92 aa). Disordered regions lie at residues 93-125 and 142-161; these read NANR…TPIQ and VAGS…FGKH. Residues 102–117 show a composition bias toward low complexity; sequence SDSGSSRNRANNNNEN.

The protein belongs to the corazonin family.

It localises to the secreted. Its function is as follows. Cardioactive peptide. Corazonin is probably involved in the physiological regulation of the heart beat. Clock (Clk) and cycle (cyc) proteins negatively regulate Crz transcription in a cell-specific manner. The chain is Pro-corazonin from Drosophila pseudoobscura pseudoobscura (Fruit fly).